The sequence spans 495 residues: DNA double-strand break repair helicase HerA (495 aa).

ATP-binding positions include Arg142, 151-156 (GSGKSN), and 459-460 (KI).

The protein belongs to the HerA family. Interacts with Rad50 and Mre11.

It carries out the reaction Couples ATP hydrolysis with the unwinding of duplex DNA at the replication fork by translocating in the 5'-3' direction. This creates two antiparallel DNA single strands (ssDNA). The leading ssDNA polymer is the template for DNA polymerase III holoenzyme which synthesizes a continuous strand.. The enzyme catalyses ATP + H2O = ADP + phosphate + H(+). The catalysed reaction is Couples ATP hydrolysis with the unwinding of duplex DNA by translocating in the 3'-5' direction.. ATPase activity is slightly stimulated by either circular single- or double-stranded (ds)DNA with a weak preference for dsDNA. Its function is as follows. Involved in DNA double-strand break (DSB) repair. Probably acts with NurA to stimulate resection of the 5' strand and produce the long 3' single-strand that is required for RadA loading. Has DNA-dependent ATPase activity and bidirectional DNA helicase activity. Loads on either a 3' or a 5' DNA tail for subsequent DNA unwinding; has no activity on blunt-end DNA. The sequence is that of DNA double-strand break repair helicase HerA from Sulfolobus acidocaldarius (strain ATCC 33909 / DSM 639 / JCM 8929 / NBRC 15157 / NCIMB 11770).